Consider the following 209-residue polypeptide: Potassium-transporting ATPase KdpC subunit (209 aa).

A helical transmembrane segment spans residues 18-38 (ALALFVLLGLGLGYSLVATGI).

It belongs to the KdpC family. The system is composed of three essential subunits: KdpA, KdpB and KdpC.

The protein resides in the cell inner membrane. In terms of biological role, part of the high-affinity ATP-driven potassium transport (or Kdp) system, which catalyzes the hydrolysis of ATP coupled with the electrogenic transport of potassium into the cytoplasm. This subunit acts as a catalytic chaperone that increases the ATP-binding affinity of the ATP-hydrolyzing subunit KdpB by the formation of a transient KdpB/KdpC/ATP ternary complex. The chain is Potassium-transporting ATPase KdpC subunit from Xanthomonas campestris pv. campestris (strain 8004).